A 592-amino-acid chain; its full sequence is Aspartate--tRNA(Asp/Asn) ligase (592 aa).

Glutamate 176 serves as a coordination point for L-aspartate. The interval 200 to 203 is aspartate; sequence QIFK. An L-aspartate-binding site is contributed by arginine 222. ATP-binding positions include 222-224 and glutamine 231; that span reads RDE. Histidine 450 is an L-aspartate binding site. Glutamate 484 lines the ATP pocket. Arginine 491 contributes to the L-aspartate binding site. ATP is bound at residue 536–539; that stretch reads GLDR.

It belongs to the class-II aminoacyl-tRNA synthetase family. Type 1 subfamily. Homodimer.

It localises to the cytoplasm. The catalysed reaction is tRNA(Asx) + L-aspartate + ATP = L-aspartyl-tRNA(Asx) + AMP + diphosphate. Functionally, aspartyl-tRNA synthetase with relaxed tRNA specificity since it is able to aspartylate not only its cognate tRNA(Asp) but also tRNA(Asn). Reaction proceeds in two steps: L-aspartate is first activated by ATP to form Asp-AMP and then transferred to the acceptor end of tRNA(Asp/Asn). In Anoxybacillus flavithermus (strain DSM 21510 / WK1), this protein is Aspartate--tRNA(Asp/Asn) ligase.